Reading from the N-terminus, the 893-residue chain is Translation initiation factor IF-2 (893 aa).

2 disordered regions span residues Lys51–Glu203 and Glu216–Gln299. Composition is skewed to basic and acidic residues over residues Ala102–Glu203, Glu216–Tyr238, and His245–Pro261. The tr-type G domain occupies Gly392–Thr561. Residues Gly401–Thr408 form a G1 region. A GTP-binding site is contributed by Gly401 to Thr408. Residues Gly426–His430 are G2. A G3 region spans residues Asp447 to Gly450. GTP contacts are provided by residues Asp447–His451 and Asn501–Asp504. The interval Asn501–Asp504 is G4. The segment at Ser537–Lys539 is G5.

It belongs to the TRAFAC class translation factor GTPase superfamily. Classic translation factor GTPase family. IF-2 subfamily.

The protein localises to the cytoplasm. Its function is as follows. One of the essential components for the initiation of protein synthesis. Protects formylmethionyl-tRNA from spontaneous hydrolysis and promotes its binding to the 30S ribosomal subunits. Also involved in the hydrolysis of GTP during the formation of the 70S ribosomal complex. This chain is Translation initiation factor IF-2, found in Aliivibrio fischeri (strain ATCC 700601 / ES114) (Vibrio fischeri).